Reading from the N-terminus, the 263-residue chain is GTP cyclohydrolase 1 type 2 homolog (263 aa).

Residues H65, H66, D104, H225, and E229 each coordinate a divalent metal cation.

This sequence belongs to the GTP cyclohydrolase I type 2/NIF3 family. Homohexamer.

The sequence is that of GTP cyclohydrolase 1 type 2 homolog from Nostoc sp. (strain PCC 7120 / SAG 25.82 / UTEX 2576).